The primary structure comprises 706 residues: Elongation factor G (706 aa).

In terms of domain architecture, tr-type G spans 8–297 (ERVRNIGIAA…AVIDYLPAPT (290 aa)). GTP contacts are provided by residues 17 to 24 (AHIDAGKT), 96 to 100 (DTPGH), and 150 to 153 (NKMD).

It belongs to the TRAFAC class translation factor GTPase superfamily. Classic translation factor GTPase family. EF-G/EF-2 subfamily.

Its subcellular location is the cytoplasm. In terms of biological role, catalyzes the GTP-dependent ribosomal translocation step during translation elongation. During this step, the ribosome changes from the pre-translocational (PRE) to the post-translocational (POST) state as the newly formed A-site-bound peptidyl-tRNA and P-site-bound deacylated tRNA move to the P and E sites, respectively. Catalyzes the coordinated movement of the two tRNA molecules, the mRNA and conformational changes in the ribosome. This chain is Elongation factor G, found in Cyanothece sp. (strain PCC 7425 / ATCC 29141).